The sequence spans 197 residues: Guanylyl cyclase-activating protein 2 (197 aa).

G2 carries N-myristoyl glycine lipidation. EF-hand domains lie at 15–50, 51–86, 87–122, and 138–173; these read DVAELQEWYKKFVVECPSGTLFMHEFKRFFGVQDNQ, EAADYVEHMFRAFDKNGDNTIDFLEYVAALNLVLRG, KLEHKLKWTFKVYDRDGNGCIDKTELLEIVESIYNL, and SPEQVVDRIFQLVDENGDGQLSLDEFIDGARKDKWV. Ca(2+) contacts are provided by D64, N66, D68, T70, E75, D100, D102, N104, C106, E111, D151, N153, D155, Q157, and E162.

As to expression, low expression in retina.

Its function is as follows. Stimulates guanylyl cyclase 1 (GC1) and GC2 when free calcium ions concentration is low and inhibits guanylyl cyclases when free calcium ions concentration is elevated. This Ca(2+)-sensitive regulation of guanylyl cyclase (GC) is a key event in recovery of the dark state of rod photoreceptors following light exposure. The polypeptide is Guanylyl cyclase-activating protein 2 (GUCA1B) (Lithobates pipiens (Northern leopard frog)).